A 347-amino-acid chain; its full sequence is Rhodopsin (347 aa).

At 1-33 (TEGPDFYIPMVNTTGVVRSPYEYPQYYLVNPAA) the chain is on the extracellular side. Residue asparagine 12 is glycosylated (N-linked (GlcNAc...) asparagine). A helical transmembrane segment spans residues 34 to 58 (FAVLGAYMFFLIIIGFPINFLTLYV). Over 59–70 (TLEHKKLRTPLN) the chain is Cytoplasmic. A helical membrane pass occupies residues 71–93 (YILLNLAVADLFMVIGGFTTTMY). The Extracellular portion of the chain corresponds to 94-107 (SSMHGYFVLGRLGC). A disulfide bond links cysteine 107 and cysteine 184. The helical transmembrane segment at 108 to 130 (NIEGFFATLGGMISLWSLAVLAI) threads the bilayer. The 'Ionic lock' involved in activated form stabilization signature appears at 131–133 (ERW). Residues 131-149 (ERWVVVCKPISNFRFGENH) lie on the Cytoplasmic side of the membrane. The chain crosses the membrane as a helical span at residues 150–170 (AIMGVSLTWVMALACTVPPLV). The Extracellular portion of the chain corresponds to 171–199 (GWSRYIPEGMQCACGIDYYTRAEGYNNES). N-linked (GlcNAc...) asparagine glycosylation is present at asparagine 197. Residues 200 to 221 (FVIYMFTFHFLFPMFIIFFCYG) traverse the membrane as a helical segment. Topologically, residues 222-249 (RLLCAVKEAAAAQQESETTQRAEREVTR) are cytoplasmic. The chain crosses the membrane as a helical span at residues 250-271 (MVILMVIGYLVCWLPYASVAWF). Topologically, residues 272–283 (IFTHKGSEFGPL) are extracellular. Residues 284–305 (FMAVPSFFAKSSSIYNPIIYIC) traverse the membrane as a helical segment. At lysine 293 the chain carries N6-(retinylidene)lysine. The Cytoplasmic portion of the chain corresponds to 306–347 (MNKQFRQCMITTLFCGKNPFEGQEEDSSTKTEASSASSVSPA). Cysteine 320 carries the S-palmitoyl cysteine lipid modification. The interval 326-347 (EGQEEDSSTKTEASSASSVSPA) is disordered. The span at 335 to 347 (KTEASSASSVSPA) shows a compositional bias: low complexity.

It belongs to the G-protein coupled receptor 1 family. Opsin subfamily. Post-translationally, phosphorylated on some or all of the serine and threonine residues present in the C-terminal region. Contains one covalently linked retinal chromophore.

Its subcellular location is the membrane. The protein resides in the cell projection. It is found in the cilium. The protein localises to the photoreceptor outer segment. In terms of biological role, photoreceptor required for image-forming vision at low light intensity. While most salt water fish species use retinal as chromophore, most freshwater fish use 3-dehydroretinal, or a mixture of retinal and 3-dehydroretinal. Light-induced isomerization of 11-cis to all-trans retinal triggers a conformational change that activates signaling via G-proteins. Subsequent receptor phosphorylation mediates displacement of the bound G-protein alpha subunit by arrestin and terminates signaling. The sequence is that of Rhodopsin (rho) from Sargocentron tiere (Blue lined squirrelfish).